The following is a 440-amino-acid chain: MSVASDSPVHSSSSSDDLAAFLDAELDSASDASSGPSEEEEAEDDVESGLKRQKLEHLEEASSSKGECEHPGSFGNMCFVCGQKLEETGVSFRYIHKEMRLNEDEISRLRDSDSRFLQRQRKLYLVLDLDHTLLNTTILRDLKPEEEYLKSHTHSLQDGCNVSGGSLFLLEFMQMMTKLRPFVHSFLKEASEMFVMYIYTMGDRNYARQMAKLLDPKGEYFGDRVISRDDGTVRHEKSLDVVLGQESAVLILDDTENAWPKHKDNLIVIERYHFFSSSCRQFDHRYKSLSELKSDESEPDGALATVLKVLKQAHALFFENVDEGISNRDVRLMLKQVRKEILKGCKIVFSRVFPTKAKPEDHPLWKMAEELGATCATEVDASVTHVVAMDVGTEKARWAVREKKYVVHRGWIDAANYLWMKQPEENFGLEQLKKQLTEEE.

Residues methionine 1–proline 36 are compositionally biased toward low complexity. The tract at residues methionine 1–glycine 49 is disordered. Positions serine 37–glutamate 47 are enriched in acidic residues. The region spanning glutamine 118–leucine 292 is the FCP1 homology domain. The 93-residue stretch at valine 337–leucine 429 folds into the BRCT domain.

As to quaternary structure, interacts with RAP74. Requires Mg(2+) as cofactor. The cofactor is Co(2+). Mn(2+) is required as a cofactor.

The protein localises to the nucleus. The enzyme catalyses O-phospho-L-seryl-[protein] + H2O = L-seryl-[protein] + phosphate. The catalysed reaction is O-phospho-L-threonyl-[protein] + H2O = L-threonyl-[protein] + phosphate. Functionally, processively dephosphorylates 'Ser-2' and/or 'Ser-5' of the heptad repeats YSPTSPS in the C-terminal domain of the largest RNA polymerase II subunit (RPB1). This promotes the activity of RNA polymerase II. Required for normal plant growth. The protein is RNA polymerase II C-terminal domain phosphatase-like 4 (CPL4) of Arabidopsis thaliana (Mouse-ear cress).